A 429-amino-acid chain; its full sequence is Glutamate-1-semialdehyde 2,1-aminomutase 2 (429 aa).

Lysine 268 carries the N6-(pyridoxal phosphate)lysine modification.

Belongs to the class-III pyridoxal-phosphate-dependent aminotransferase family. HemL subfamily. Homodimer. It depends on pyridoxal 5'-phosphate as a cofactor.

It localises to the cytoplasm. The enzyme catalyses (S)-4-amino-5-oxopentanoate = 5-aminolevulinate. The protein operates within porphyrin-containing compound metabolism; protoporphyrin-IX biosynthesis; 5-aminolevulinate from L-glutamyl-tRNA(Glu): step 2/2. This Listeria monocytogenes serotype 4a (strain HCC23) protein is Glutamate-1-semialdehyde 2,1-aminomutase 2.